A 218-amino-acid chain; its full sequence is Elongation factor Ts (218 aa).

The tract at residues 82-85 (TDFV) is involved in Mg(2+) ion dislocation from EF-Tu.

The protein belongs to the EF-Ts family.

It localises to the cytoplasm. In terms of biological role, associates with the EF-Tu.GDP complex and induces the exchange of GDP to GTP. It remains bound to the aminoacyl-tRNA.EF-Tu.GTP complex up to the GTP hydrolysis stage on the ribosome. This Prochlorococcus marinus (strain MIT 9215) protein is Elongation factor Ts.